Reading from the N-terminus, the 131-residue chain is UPF0102 protein YraN (131 aa).

Over residues 1–19 (MATVPTRSGSPRQLTTKQT) the composition is skewed to polar residues. Residues 1–20 (MATVPTRSGSPRQLTTKQTG) are disordered.

Belongs to the UPF0102 family.

The sequence is that of UPF0102 protein YraN from Escherichia coli O157:H7.